A 234-amino-acid polypeptide reads, in one-letter code: uncharacterized protein (234 aa).

Positions Met-1–Ser-12 are enriched in low complexity. The interval Met-1–Arg-184 is disordered. Polar residues-rich tracts occupy residues Thr-21 to Ser-40 and Lys-52 to Pro-64. The span at Lys-66–Ser-77 shows a compositional bias: low complexity. Residues Gly-105–Ser-120 show a composition bias toward polar residues. The segment covering Leu-152 to Ser-167 has biased composition (basic and acidic residues).

Interacts with RLK902. Expressed in stems, rosette leaves and roots and weakly in inflorescences.

This is an uncharacterized protein from Arabidopsis thaliana (Mouse-ear cress).